The following is a 154-amino-acid chain: Protein MoxZ (154 aa).

The polypeptide is Protein MoxZ (moxZ) (Paracoccus denitrificans).